The chain runs to 902 residues: Cytosolic 10-formyltetrahydrofolate dehydrogenase (902 aa).

A hydrolase domain region spans residues 1–310 (MKIAVIGQSL…PASQYYKTAD (310 aa)). 88–90 (QFI) contacts (6R)-10-formyltetrahydrofolate. The active-site Proton donor is His106. A (6R)-10-formyltetrahydrofolate-binding site is contributed by Asp142. Positions 318–395 (DEEKKFSEEI…EFIQMVVRRL (78 aa)) constitute a Carrier domain. Ser354 is subject to O-(pantetheine 4'-phosphoryl)serine. Residues 417–902 (TVKIPHQLFI…LKTKAVTIEY (486 aa)) are aldehyde dehydrogenase domain. NADP(+)-binding positions include 571 to 573 (IPW), 597 to 600 (KPAQ), 630 to 635 (GSLIGQ), 650 to 651 (GS), and 673 to 674 (EL). Catalysis depends on Glu673, which acts as the Proton acceptor. The Proton donor role is filled by Cys707. NADP(+) is bound by residues Lys757 and 804–806 (ESF).

This sequence in the N-terminal section; belongs to the GART family. It in the C-terminal section; belongs to the aldehyde dehydrogenase family. ALDH1L subfamily. Homotetramer. Phosphopantetheinylation at Ser-354 by AASDHPPT is required for the formyltetrahydrofolate dehydrogenase activity.

It is found in the cytoplasm. The protein localises to the cytosol. The catalysed reaction is (6R)-10-formyltetrahydrofolate + NADP(+) + H2O = (6S)-5,6,7,8-tetrahydrofolate + CO2 + NADPH + H(+). Cytosolic 10-formyltetrahydrofolate dehydrogenase that catalyzes the NADP(+)-dependent conversion of 10-formyltetrahydrofolate to tetrahydrofolate and carbon dioxide. May also have an NADP(+)-dependent aldehyde dehydrogenase activity towards formaldehyde, acetaldehyde, propionaldehyde, and benzaldehyde. Regulates reduced folate pools as well as glycine metabolism. In Xenopus tropicalis (Western clawed frog), this protein is Cytosolic 10-formyltetrahydrofolate dehydrogenase (aldh1l1).